We begin with the raw amino-acid sequence, 1065 residues long: Cellulose synthase A catalytic subunit 3 [UDP-forming] (1065 aa).

Residues 1–260 (MESEGETAGK…PSSRINPYRM (260 aa)) lie on the Cytoplasmic side of the membrane. Serine 3 bears the Phosphoserine mark. 8 residues coordinate Zn(2+): cysteine 20, cysteine 23, cysteine 39, cysteine 42, cysteine 47, cysteine 50, cysteine 62, and cysteine 65. The RING-type; degenerate zinc finger occupies 20–66 (CQICSDNVGKTVDGDRFVACDICSFPVCRPCYEYERKDGNQSCPQCK). 3 positions are modified to phosphoserine: serine 151, serine 211, and serine 216. Residues 261-281 (VIMLRLVILCLFLHYRITNPV) form a helical membrane-spanning segment. The Extracellular segment spans residues 282-283 (PN). A helical membrane pass occupies residues 284–304 (AFALWLVSVICEIWFALSWIL). Over 305 to 842 (DQFPKWFPVN…LERFAYVNTT (538 aa)) the chain is Cytoplasmic. UDP-alpha-D-glucose-binding residues include serine 343, lysine 349, glutamate 350, and aspartate 379. The active site involves aspartate 379. Residues 433 to 457 (VKDRRAMKREYEEFKIRINALVSKA) adopt a coiled-coil conformation. Position 520 (lysine 520) interacts with UDP-alpha-D-glucose. Residues lysine 521 and aspartate 545 each contribute to the Mn(2+) site. The tract at residues 643-672 (SKLCGGSRKKNSKAKKESDKKKSGRHTDST) is disordered. The segment covering 656–670 (AKKESDKKKSGRHTD) has biased composition (basic and acidic residues). Aspartate 765 is a catalytic residue. A helical membrane pass occupies residues 843–863 (IYPITSIPLLMYCTLPAVCLF). Over 864 to 874 (TNQFIIPQISN) the chain is Extracellular. A helical membrane pass occupies residues 875-895 (IASIWFLSLFLSIFATGILEM). The Cytoplasmic portion of the chain corresponds to 896-910 (RWSGVGIDEWWRNEQ). The helical transmembrane segment at 911-931 (FWVIGGVSAHLFAVFQGILKV) threads the bilayer. The Extracellular segment spans residues 932–961 (LAGIDTNFTVTSKASDEDGDFAELYLFKWT). A glycan (N-linked (GlcNAc...) asparagine) is linked at asparagine 938. Residues 962 to 982 (TLLIPPTTLLIVNLVGVVAGV) form a helical membrane-spanning segment. Residues 983-993 (SYAINSGYQSW) are Cytoplasmic-facing. A helical membrane pass occupies residues 994-1014 (GPLFGKLFFAFWVIVHLYPFL). The Extracellular portion of the chain corresponds to 1015-1023 (KGLMGRQNR). A helical transmembrane segment spans residues 1024-1044 (TPTIVVVWSVLLASIFSLLWV). At 1045 to 1065 (RIDPFTSRVTGPDILECGINC) the chain is on the cytoplasmic side.

Belongs to the glycosyltransferase 2 family. Plant cellulose synthase subfamily. As to quaternary structure, homodimer. Interacts with CESA1 and CESA6. Interacts with STL1 and STL2, but not with GOT1. Binds to CSI1 and CSI3. Interacts with PAT24/TIP1. It depends on Zn(2+) as a cofactor. Mn(2+) serves as cofactor. Post-translationally, palmitoylated, in part by PAT24/TIP1. In terms of tissue distribution, expressed in young plants, flowers and roots, and to a lower extent in leaves and stems. Localized in all cells except meristematic cells. Accumulates particularly in root caps, root hairs, epidermal layer, midveins of leaves and anthers. Not present in old tissues.

Its subcellular location is the cell membrane. The protein resides in the golgi apparatus membrane. It carries out the reaction [(1-&gt;4)-beta-D-glucosyl](n) + UDP-alpha-D-glucose = [(1-&gt;4)-beta-D-glucosyl](n+1) + UDP + H(+). It functions in the pathway glycan metabolism; plant cellulose biosynthesis. Functionally, catalytic subunit of cellulose synthase terminal complexes ('rosettes'), required for beta-1,4-glucan microfibril crystallization, a major mechanism of the cell wall formation. Involved in the primary cell wall formation, especially in roots. This Arabidopsis thaliana (Mouse-ear cress) protein is Cellulose synthase A catalytic subunit 3 [UDP-forming].